The sequence spans 155 residues: S-ribosylhomocysteine lyase (155 aa).

Residues histidine 58, histidine 62, and cysteine 125 each contribute to the Fe cation site.

Belongs to the LuxS family. Homodimer. The cofactor is Fe cation.

It catalyses the reaction S-(5-deoxy-D-ribos-5-yl)-L-homocysteine = (S)-4,5-dihydroxypentane-2,3-dione + L-homocysteine. In terms of biological role, involved in the synthesis of autoinducer 2 (AI-2) which is secreted by bacteria and is used to communicate both the cell density and the metabolic potential of the environment. The regulation of gene expression in response to changes in cell density is called quorum sensing. Catalyzes the transformation of S-ribosylhomocysteine (RHC) to homocysteine (HC) and 4,5-dihydroxy-2,3-pentadione (DPD). This chain is S-ribosylhomocysteine lyase, found in Helicobacter pylori (strain P12).